We begin with the raw amino-acid sequence, 210 residues long: Thymidylate kinase (210 aa).

10–17 (GPEGAGKS) contacts ATP.

The protein belongs to the thymidylate kinase family.

It catalyses the reaction dTMP + ATP = dTDP + ADP. Functionally, phosphorylation of dTMP to form dTDP in both de novo and salvage pathways of dTTP synthesis. This Pseudomonas aeruginosa (strain UCBPP-PA14) protein is Thymidylate kinase.